A 100-amino-acid polypeptide reads, in one-letter code: Urease subunit gamma (100 aa).

The protein belongs to the urease gamma subunit family. In terms of assembly, heterotrimer of UreA (gamma), UreB (beta) and UreC (alpha) subunits. Three heterotrimers associate to form the active enzyme.

It localises to the cytoplasm. The enzyme catalyses urea + 2 H2O + H(+) = hydrogencarbonate + 2 NH4(+). It participates in nitrogen metabolism; urea degradation; CO(2) and NH(3) from urea (urease route): step 1/1. This chain is Urease subunit gamma, found in Actinobacillus pleuropneumoniae (Haemophilus pleuropneumoniae).